The following is a 1229-amino-acid chain: ABC transporter B family member 22 (1229 aa).

A run of 6 helical transmembrane segments spans residues Met-22–Ile-42, Val-69–Trp-89, Leu-145–Trp-167, Ile-171–Asn-193, Gly-251–Gly-271, and Met-274–Tyr-294. In terms of domain architecture, ABC transmembrane type-1 1 spans Met-22 to Glu-311. The ABC transporter 1 domain maps to Val-346 to Arg-582. Gly-381 to Ser-388 provides a ligand contact to ATP. 2 N-linked (GlcNAc...) asparagine glycosylation sites follow: Asn-529 and Asn-594. Helical transmembrane passes span Ala-661 to Ala-681 and Ile-703 to Gln-723. Positions Ala-661–Lys-949 constitute an ABC transmembrane type-1 2 domain. N-linked (GlcNAc...) asparagine glycosylation occurs at Asn-758. Transmembrane regions (helical) follow at residues Val-782–Leu-800, Ser-807–Thr-823, Trp-885–Tyr-908, and Phe-923–Met-943. Residues Ile-984–Val-1222 form the ABC transporter 2 domain. N-linked (GlcNAc...) asparagine glycosylation occurs at Asn-1004. Position 1019 to 1026 (Gly-1019 to Ser-1026) interacts with ATP. An N-linked (GlcNAc...) asparagine glycan is attached at Asn-1157.

This sequence belongs to the ABC transporter superfamily. ABCB family. Multidrug resistance exporter (TC 3.A.1.201) subfamily.

Its subcellular location is the membrane. This chain is ABC transporter B family member 22 (ABCB22), found in Arabidopsis thaliana (Mouse-ear cress).